Consider the following 152-residue polypeptide: Transcriptional regulator MraZ (152 aa).

SpoVT-AbrB domains follow at residues 7–51 (KERH…APDR) and 89–132 (LEMV…DPQR).

This sequence belongs to the MraZ family. In terms of assembly, forms oligomers.

The protein resides in the cytoplasm. It localises to the nucleoid. The sequence is that of Transcriptional regulator MraZ from Pelodictyon phaeoclathratiforme (strain DSM 5477 / BU-1).